Reading from the N-terminus, the 436-residue chain is Prenyltransferase nscD (436 aa).

Belongs to the tryptophan dimethylallyltransferase family.

It functions in the pathway secondary metabolite biosynthesis. In terms of biological role, prenyltransferase; part of the gene cluster that mediates the biosynthesis of neosartoricin B, a prenylated anthracenone that probably exhibits T-cell antiproliferative activity, suggestive of a physiological role as an immunosuppressive agent. The non-reducing polyketide synthase nscA probably synthesizes and cyclizes the decaketide backbone. The hydrolase nscB then mediates the product release through hydrolysis followed by spontaneous decarboxylation. The prenyltransferase nscD catalyzes the addition of the dimethylallyl group to the aromatic C5. The FAD-dependent monooxygenase nscC is then responsible for the stereospecific hydroxylation at C2. Neosartoricin B can be converted into two additional compounds neosartoricins C and D. Neosartoricin C is a spirocyclic compound that is cyclized through the attack of C3 hydroxyl on C14, followed by dehydration. On the other hand, neosartoricin D is a further cyclized compound in which attack of C2 on C14 in neosartoricin C results in the formation of the acetal-containing dioxabicyclo-octanone ring. Both of these compounds are novel and possibly represent related metabolites of the gene cluster. The chain is Prenyltransferase nscD from Arthroderma otae (strain ATCC MYA-4605 / CBS 113480) (Microsporum canis).